Here is a 311-residue protein sequence, read N- to C-terminus: Pyrimidine-specific ribonucleoside hydrolase RihA (311 aa).

His240 is an active-site residue.

Belongs to the IUNH family. RihA subfamily.

Functionally, hydrolyzes with equal efficiency cytidine or uridine to ribose and cytosine or uracil, respectively. This is Pyrimidine-specific ribonucleoside hydrolase RihA from Escherichia coli O45:K1 (strain S88 / ExPEC).